A 262-amino-acid chain; its full sequence is Insulin-like growth factor-binding protein 1 (262 aa).

Positions 1-25 (MPEVPAVRAWPLLLSLALQLGAAAG) are cleaved as a signal peptide. The IGFBP N-terminal domain maps to 28–108 (QPLHCAPCSA…TRGQGACMPA (81 aa)). Cystine bridges form between Cys32–Cys59, Cys35–Cys61, Cys43–Cys62, Cys50–Cys65, Cys72–Cys85, and Cys79–Cys105. Residues 101–133 (GQGACMPAPSAEATETKDPAAPETTSPESTEMT) form a disordered region. A compositionally biased stretch (low complexity) spans 121–131 (APETTSPESTE). Residues Ser126, Ser129, and Ser147 each carry the phosphoserine modification. Tyr161 is modified (phosphotyrosine). In terms of domain architecture, Thyroglobulin type-1 spans 176–254 (KEPCQRELYK…STAVRGDPKC (79 aa)). Disulfide bonds link Cys179–Cys209, Cys220–Cys231, and Cys233–Cys254. Ser245 bears the Phosphoserine mark. The short motif at 249–251 (RGD) is the Cell attachment site element.

As to quaternary structure, binds equally well IGF1 and IGF2. Interacts with integrin ITGA5:ITGB1. Interacts with VHL; this interaction inhibits HIF1A degradation.

The protein localises to the secreted. Multifunctional protein that plays a critical role in regulating the availability of IGFs such as IGF1 and IGF2 to their receptors and thereby regulates IGF-mediated cellular processes including cell migration, proliferation, differentiation or apoptosis in a cell-type specific manner. Also plays a positive role in cell migration by interacting with integrin ITGA5:ITGB1 through its RGD motif. Mechanistically, binding to integrins leads to activation of focal adhesion kinase/PTK2 and stimulation of the mitogen-activated protein kinase (MAPK) pathway. Regulates cardiomyocyte apoptosis by suppressing HIF-1alpha/HIF1A degradation through ubiquitination. This is Insulin-like growth factor-binding protein 1 (IGFBP1) from Sus scrofa (Pig).